Consider the following 158-residue polypeptide: NAD(P)H-quinone oxidoreductase subunit J, chloroplastic (158 aa).

Belongs to the complex I 30 kDa subunit family. NDH is composed of at least 16 different subunits, 5 of which are encoded in the nucleus.

It is found in the plastid. The protein localises to the chloroplast thylakoid membrane. The enzyme catalyses a plastoquinone + NADH + (n+1) H(+)(in) = a plastoquinol + NAD(+) + n H(+)(out). It carries out the reaction a plastoquinone + NADPH + (n+1) H(+)(in) = a plastoquinol + NADP(+) + n H(+)(out). Functionally, NDH shuttles electrons from NAD(P)H:plastoquinone, via FMN and iron-sulfur (Fe-S) centers, to quinones in the photosynthetic chain and possibly in a chloroplast respiratory chain. The immediate electron acceptor for the enzyme in this species is believed to be plastoquinone. Couples the redox reaction to proton translocation, and thus conserves the redox energy in a proton gradient. This Nymphaea alba (White water-lily) protein is NAD(P)H-quinone oxidoreductase subunit J, chloroplastic.